A 225-amino-acid chain; its full sequence is Suppressor of cytokine signaling 3 (225 aa).

The segment at 22 to 33 (LKTFSSKSEYQL) is kinase inhibitory region (KIR). Positions 34–45 (VVNAVRKLQESG) are extended SH2 subdomain (ESS). One can recognise an SH2 domain in the interval 46–142 (FYWSAVTGGE…TPSFSLPPTE (97 aa)). The segment at 131-160 (PGTPSFSLPPTEPSSEVPEQPPAQALPGST) is disordered. Residues 177 to 224 (VLSRPLSSNVATLQHLCRKTVNGHLDSYEKVTQLPGPIREFLDQYDAP) enclose the SOCS box domain.

In terms of assembly, interacts with multiple activated proteins of the tyrosine kinase signaling pathway including IGF1 receptor, insulin receptor and JAK2. Binding to JAK2 is mediated through the KIR and SH2 domains to a phosphorylated tyrosine residue within the JAK2 JH1 domain. Binds specific activated tyrosine residues of the leptin, EPO, IL12, GSCF and gp130 receptors. Interaction with CSNK1E stabilizes SOCS3 protein. Component of the probable ECS(SOCS3) E3 ubiquitin-protein ligase complex which contains CUL5, RNF7/RBX2, elongin BC complex and SOCS3. Interacts with CUL5, RNF7, ELOB and ELOC. Interacts with FGFR3. Interacts with INSR. Interacts with BCL10; this interaction may interfere with BCL10-binding with PELI2. Interacts with NOD2 (via CARD domain); the interaction promotes NOD2 degradation. Phosphorylated on tyrosine residues after stimulation by the cytokines, IL-2, EPO or IGF1. Low expression in lung, spleen and thymus. Expressed in Th2 but not TH1 cells.

The protein operates within protein modification; protein ubiquitination. Its function is as follows. SOCS family proteins form part of a classical negative feedback system that regulates cytokine signal transduction. SOCS3 is involved in negative regulation of cytokines that signal through the JAK/STAT pathway. Inhibits cytokine signal transduction by binding to tyrosine kinase receptors including IL6ST/gp130, LIF, erythropoietin, insulin, IL12, GCSF and leptin receptors. Binding to JAK2 inhibits its kinase activity and regulates IL6 signaling. Suppresses fetal liver erythropoiesis. Regulates onset and maintenance of allergic responses mediated by T-helper type 2 cells. Probable substrate recognition component of a SCF-like ECS (Elongin BC-CUL2/5-SOCS-box protein) E3 ubiquitin-protein ligase complex which mediates the ubiquitination and subsequent proteasomal degradation of target proteins. This is Suppressor of cytokine signaling 3 from Mus musculus (Mouse).